The following is a 563-amino-acid chain: MAAIQANVTTGIPANANTITSSEPVRPLANFPPSVWGDRFLSFSLDKSELERHAIAMEKPKEDLRKLIVDPTMDSNEKLGLIYSVHRLGLTYMFMKEIESQLDKLFKEFSLQDCEEVDLYTISINFQVFRHLGYKLPSDVFNKFKDASSGTFRESITRDVKGMLGLYESAQLRTRGEKVLDEASVFIEGKLKSVVSTLEGNLAQQVKQSLRRPFHQGMPMIEARLYFSNYEEECSSHDSLFKLAKLHFKYLELQQKEELRIVTKWWKDMRFQETTPYIRDRVPEIYLWILGLYFEPRYSLARIIATKITLFLVVLDDTYDAYATIEEIRLLTDAINKWDISAMEQIPEYIRPFYKILLDEYAEIENIMAREGRANTVIASKEAFQDIARGYLEEAEWTNNGYVASFPEYMKNGLITSAYNVISKSALVGMGEIVSEDALAWYESHLKTLQASELISRLQDDVMTYQFERERGQSATGVDAFIKTYGVSEKKAIDELKIMIENAWKDINEGCLKPRQVSMDLLAPILNLARMIDVVYRYDDGFTFPGKTLKEYINLLFVGSLPM.

Positions 316, 320, 460, 464, and 468 each coordinate Mg(2+). The short motif at 316 to 320 is the DDXXD motif element; that stretch reads DDTYD.

It belongs to the terpene synthase family. Tpsa subfamily. The cofactor is Mg(2+). Mn(2+) is required as a cofactor. As to expression, high expression in disk florets, moderate expression in ray florets and detected in leaves and stems, but not in roots.

The enzyme catalyses (2E,6E)-farnesyl diphosphate = (+)-(R)-germacrene A + diphosphate. The protein operates within secondary metabolite biosynthesis; terpenoid biosynthesis. Sesquiterpene synthase involved in germacrene A biosynthesis. May be involved in the biosynthesis of the sesquiterpene lactone matricine, one of the major active compounds of chamomile flowers. This Matricaria chamomilla var. recutita (German chamomile) protein is Germacrene-A synthase.